The sequence spans 400 residues: D(3) dopamine receptor (400 aa).

At 1–32 (MAPLSQLSGHLNYTCGVENSTGASQARPHAYY) the chain is on the extracellular side. 2 N-linked (GlcNAc...) asparagine glycosylation sites follow: asparagine 12 and asparagine 19. Residues 33 to 55 (ALSYCALILAIVFGNGLVCMAVL) traverse the membrane as a helical segment. Topologically, residues 56–65 (KERALQTTTN) are cytoplasmic. The helical transmembrane segment at 66-88 (YLVVSLAVADLLVATLVMPWVVY) threads the bilayer. At 89–104 (LEVTGGVWNFSRVCCD) the chain is on the extracellular side. Residue asparagine 97 is glycosylated (N-linked (GlcNAc...) asparagine). Cysteine 103 and cysteine 181 form a disulfide bridge. Residues 105-126 (VFVTLDVMMCTASILNLCAISI) form a helical membrane-spanning segment. Residues 127 to 149 (DRYTAVVMPVHYQHGTGQSSCRR) are Cytoplasmic-facing. A helical membrane pass occupies residues 150–170 (VTLMITAVWVLAFAVSCPLLF). Over 171–187 (GFNTTGDPTVCSISNPD) the chain is Extracellular. An N-linked (GlcNAc...) asparagine glycan is attached at asparagine 173. A helical transmembrane segment spans residues 188 to 209 (FVIYSSVVSFYLPFGVTVLVYA). At 210–329 (RIYVVLKQRR…VPLREKKATQ (120 aa)) the chain is on the cytoplasmic side. Residues 330–351 (MVAIVLGAFIVCWLPFFLTHVL) form a helical membrane-spanning segment. At 352 to 366 (NTHCQTCHVSPELYS) the chain is on the extracellular side. Cysteine 355 and cysteine 358 form a disulfide bridge. Residues 367-386 (ATTWLGYVNSALNPVIYTTF) traverse the membrane as a helical segment. Residues 387–400 (NIEFRKAFLKILSC) are Cytoplasmic-facing.

It belongs to the G-protein coupled receptor 1 family. As to quaternary structure, interacts with CLIC6. Interacts with GRK4. Interacts with PALM. Interacts with FLNA (via filamin repeat 21); increases PKA-mediated phosphorylation of FLNA. Phosphorylated by GRK4. In terms of processing, palmitoylated.

It localises to the cell membrane. Functionally, dopamine receptor whose activity is mediated by G proteins which inhibit adenylyl cyclase. Promotes cell proliferation. This is D(3) dopamine receptor (DRD3) from Chlorocebus aethiops (Green monkey).